A 740-amino-acid polypeptide reads, in one-letter code: Elongation factor 2 (740 aa).

Residues 23–264 (AQIRNAGTLA…MIIEHVPPPN (242 aa)) enclose the tr-type G domain. Residues 32 to 39 (AHVDHGKT), 98 to 102 (DTPGH), and 152 to 155 (NKID) each bind GTP. Histidine 605 is modified (diphthamide).

The protein belongs to the TRAFAC class translation factor GTPase superfamily. Classic translation factor GTPase family. EF-G/EF-2 subfamily.

The protein localises to the cytoplasm. Functionally, catalyzes the GTP-dependent ribosomal translocation step during translation elongation. During this step, the ribosome changes from the pre-translocational (PRE) to the post-translocational (POST) state as the newly formed A-site-bound peptidyl-tRNA and P-site-bound deacylated tRNA move to the P and E sites, respectively. Catalyzes the coordinated movement of the two tRNA molecules, the mRNA and conformational changes in the ribosome. This Pyrobaculum neutrophilum (strain DSM 2338 / JCM 9278 / NBRC 100436 / V24Sta) (Thermoproteus neutrophilus) protein is Elongation factor 2.